We begin with the raw amino-acid sequence, 481 residues long: Serine/threonine-protein kinase US3 (481 aa).

The disordered stretch occupies residues 12–63 (RPDKRQEASVPPETNTAPAFPASTFYTPAEDAYLAPGPPETIHPSRPPSPGE). The segment covering 47–61 (PGPPETIHPSRPPSP) has biased composition (pro residues). The 288-residue stretch at 191 to 478 (FAIHGALIPG…AAELLRLPLF (288 aa)) folds into the Protein kinase domain. ATP is bound by residues 197–205 (LIPGSEGCV) and lysine 220. The active-site Proton acceptor is the aspartate 305.

It belongs to the protein kinase superfamily. Ser/Thr protein kinase family. Interacts with host LAT; this interaction prevents LAT activation of TRAF6. Phosphorylated by UL13; this phosphorylation regulates subsequent phosphorylation of UL31 and UL34 by US3. Autophosphorylated.

The protein localises to the host cytoplasm. The protein resides in the host nucleus. The catalysed reaction is L-seryl-[protein] + ATP = O-phospho-L-seryl-[protein] + ADP + H(+). It catalyses the reaction L-threonyl-[protein] + ATP = O-phospho-L-threonyl-[protein] + ADP + H(+). In terms of biological role, multifunctional serine/threonine kinase that plays a role in several processes including egress of virus particles from the nucleus, modulation of the actin cytoskeleton and inhibition of host immune response. Phosphorylates UL31 and UL34, two critical regulators of capsid budding from nucleus to endoplasmic reticulum, thereby facilitating virion egress. Modulates and redistributes host components of the nuclear envelope, including LMNA, emerin/EMD and the nuclear matrix protein MATR3. In turn, facilitates nuclear pore impairment and capsid release through impaired nuclear envelope. Phosphorylates envelope glycoprotein B (gB), probably to direct it to the cell surface. Promotes virus intracellular spread by restructuring host cell cytoskeleton. Blocks host apoptosis to extend cell survival and allow efficient viral replication. Promotes viral gene expression by phosphorylating host HDAC2 to reduce viral genome silencing. Strongly inhibits TCR-activated signal transduction in T-cells by reducing the ubiquitination of LAT and TRAF6, leading to a suboptimal activation of LAT. Subverts host antiviral innate immunity by inhibiting type I interferon production through hyperphosphorylation of beta-catenin/CTNNB1. In addition, phosphorylates the RNA sensor RIGI and the transcription factor IRF3 to prevent the RLR-mediated antiviral signaling pathway. Hyperphosphorylates host RELA and thereby dampens NF-kappa-B signaling. Acts as an immunoevasin partly responsible for inhibition of MR1 expression and antigen presentation in response to bacterial infection. This is Serine/threonine-protein kinase US3 (US3) from Human herpesvirus 2 (strain HG52) (HHV-2).